A 274-amino-acid polypeptide reads, in one-letter code: NH(3)-dependent NAD(+) synthetase (274 aa).

Residue 46 to 53 participates in ATP binding; the sequence is GISGGQDS. Position 52 (Asp52) interacts with Mg(2+). Arg140 is a binding site for deamido-NAD(+). ATP is bound at residue Thr160. Glu165 provides a ligand contact to Mg(2+). Lys173 and Asp180 together coordinate deamido-NAD(+). ATP is bound by residues Lys189 and Thr211. Residue 260 to 261 participates in deamido-NAD(+) binding; the sequence is HK.

It belongs to the NAD synthetase family. As to quaternary structure, homodimer.

It catalyses the reaction deamido-NAD(+) + NH4(+) + ATP = AMP + diphosphate + NAD(+) + H(+). It functions in the pathway cofactor biosynthesis; NAD(+) biosynthesis; NAD(+) from deamido-NAD(+) (ammonia route): step 1/1. Its function is as follows. Catalyzes the ATP-dependent amidation of deamido-NAD to form NAD. Uses ammonia as a nitrogen source. The sequence is that of NH(3)-dependent NAD(+) synthetase from Lysinibacillus sphaericus (strain C3-41).